The chain runs to 357 residues: Zinc finger protein 830 (357 aa).

The C2H2-type zinc finger occupies 47–69 (CVVCNIQIKSELLWPAHILGKQH). 3 disordered regions span residues 98–126 (RKGSEPENQESKRIKGTEDQPTALKTKLP), 157–194 (DDDEVEGEEYENVNEASTSLQKPAEIPLPPPTSSADRL), and 231–255 (ALPEGFFDDPEADAKVRKVDAPKDQ). Residues 99–115 (KGSEPENQESKRIKGTE) are compositionally biased toward basic and acidic residues. Acidic residues predominate over residues 157-168 (DDDEVEGEEYEN). Residues 242-255 (ADAKVRKVDAPKDQ) are compositionally biased toward basic and acidic residues. Positions 279 to 325 (AEEDEEGRLDRQIDEIDEQIECYRRVEHLRDLKDTLQDAKMEVLKSK) form a coiled coil.

Its subcellular location is the nucleus. The protein resides in the chromosome. It localises to the nucleus speckle. In terms of biological role, may act as an important regulator of the cell cycle that participates in the maintenance of genome integrity. This is Zinc finger protein 830 from Xenopus tropicalis (Western clawed frog).